The sequence spans 314 residues: Cytochrome f (314 aa).

A signal peptide spans 1-30; it reads MATNKFFKSLLFTLTIAISSFGFCVENSSA. The heme site is built by tyrosine 31, cysteine 51, cysteine 54, and histidine 55. The chain crosses the membrane as a helical span at residues 280–300; the sequence is ILGYLAFCFCLLLTQVLLVLK.

The protein belongs to the cytochrome f family. The 4 large subunits of the cytochrome b6-f complex are cytochrome b6, subunit IV (17 kDa polypeptide, petD), cytochrome f and the Rieske protein, while the 4 small subunits are PetG, PetL, PetM and PetN. The complex functions as a dimer. Heme serves as cofactor.

It is found in the plastid. The protein resides in the chloroplast thylakoid membrane. Its function is as follows. Component of the cytochrome b6-f complex, which mediates electron transfer between photosystem II (PSII) and photosystem I (PSI), cyclic electron flow around PSI, and state transitions. The chain is Cytochrome f from Thalassiosira pseudonana (Marine diatom).